A 329-amino-acid polypeptide reads, in one-letter code: Cytosolic arginine sensor for mTORC1 subunit 2 (329 aa).

ACT domains follow at residues 72–139 and 262–322; these read ADAT…MHTL and ELWK…NALQ.

It belongs to the GATS family. In terms of assembly, may form homodimers and heterodimers.

It is found in the cytoplasm. The protein resides in the cytosol. Functions as a negative regulator of the TORC1 signaling pathway. In Xenopus tropicalis (Western clawed frog), this protein is Cytosolic arginine sensor for mTORC1 subunit 2.